We begin with the raw amino-acid sequence, 450 residues long: MMKLSLLLGLVSFSAVLASENRRGNCQMCPEGTRYFEKNNLLGRRFKNDVRKLCGDGMSSDVHDESSSHSSSSSDCKPRRRRHHRRYEDSCSFGSSDCDDSSTYSSCVSSECSPPCRPVPLNCDYELKTPIINMGERIFEFLKNYEDQYKKAVVLFLTRILSQIDGFAPSYPSADYEPLIEQLETLGVTVPSNMAADLAALDAAEATSLAGTIRANAQKVIGDLLARVNTMCYLDLMSLVTSGLFASQVTSAFSNTQPIITIAGNDLFTKQMAVFQRLPGTLPSAAITAITNALQANKNNFVTFFTTQTTNLQTDVQNALTALITALTTLTSTTSTEFTQFANSEIGALTGRIFGSSGSGSGGSSGGSSGSGSDGSGSGGSSGGSSGSGSDGSGSGGSSGGSSGSGSDGSGSGGSSGGSSGSGSDGSGSGGSSGGSSGSGSGGESGGSSS.

An N-terminal signal peptide occupies residues 1–18 (MMKLSLLLGLVSFSAVLA). 2 disordered regions span residues 58 to 80 (MSSD…KPRR) and 357 to 450 (SGSG…GSSS). Tandem repeats lie at residues 358–374 (GSGS…SGSD), 375–391 (GSGS…SGSD), 392–408 (GSGS…SGSD), 409–425 (GSGS…SGSD), and 426–442 (GSGS…SGSG). Positions 358-442 (GSGSGGSSGG…SGGSSGSGSG (85 aa)) are 5 X 17 AA tandem repeats of G-S-G-S-G-G-S-S-G-G-S-S-G-S-G-S-D.

The protein localises to the spore. It localises to the perispore. Functionally, spore wall component. The polypeptide is Spore wall protein 1 (SWP1) (Encephalitozoon cuniculi (strain GB-M1) (Microsporidian parasite)).